Consider the following 339-residue polypeptide: uncharacterized protein (339 aa).

It to bacterial alkanal monooxygenase alpha and beta chains.

This is an uncharacterized protein from Bacillus subtilis (strain 168).